The sequence spans 345 residues: D-erythrose-4-phosphate dehydrogenase (345 aa).

Position 11 to 12 (R11 to I12) interacts with NAD(+). Residues S158 to T160, R204, T217 to K218, and R240 each bind substrate. C159 serves as the catalytic Nucleophile. N322 contacts NAD(+).

Belongs to the glyceraldehyde-3-phosphate dehydrogenase family. Epd subfamily. Homotetramer.

The protein localises to the cytoplasm. It carries out the reaction D-erythrose 4-phosphate + NAD(+) + H2O = 4-phospho-D-erythronate + NADH + 2 H(+). It functions in the pathway cofactor biosynthesis; pyridoxine 5'-phosphate biosynthesis; pyridoxine 5'-phosphate from D-erythrose 4-phosphate: step 1/5. Functionally, catalyzes the NAD-dependent conversion of D-erythrose 4-phosphate to 4-phosphoerythronate. The polypeptide is D-erythrose-4-phosphate dehydrogenase (Vibrio campbellii (strain ATCC BAA-1116)).